A 394-amino-acid polypeptide reads, in one-letter code: MSQLETRTEPMVVNFGPHHPSMHGVLRLVVTLDGEDVIDCEPVIGYLHRGMEKIAENRTNVMFVPYVSRMDYAAGMFYEAIVVNAPERLANISIPKRASYIRVLMLELNRIANHLLWLGPFLADVGAQTPFFYIFREREMIYDLWEAATGQRLINNNFFRIGGVACDLPWGWLEKCKDFCDWFGPKIDEYEKLITNNPIFRRRIEGLGSISKEKAINWSLSGPMLRASGVPWDLRKVDHYECYDDFDWNIAIAEEGDCYARYRVRIEEMRQSLRILRQACEMIPGGPTENLEASRIAEGKNSPFAGFDFQYVAKKVAPTFKIPNGELYTRLESGKGEIGVFIQGNNDVTPWRFKIRAADLNNLQILPHILKGAKVADIMAILGSIDVIMGSVDR.

Belongs to the complex I 49 kDa subunit family. NDH-1 can be composed of about 15 different subunits; different subcomplexes with different compositions have been identified which probably have different functions.

Its subcellular location is the cellular thylakoid membrane. The catalysed reaction is a plastoquinone + NADH + (n+1) H(+)(in) = a plastoquinol + NAD(+) + n H(+)(out). The enzyme catalyses a plastoquinone + NADPH + (n+1) H(+)(in) = a plastoquinol + NADP(+) + n H(+)(out). Its function is as follows. NDH-1 shuttles electrons from an unknown electron donor, via FMN and iron-sulfur (Fe-S) centers, to quinones in the respiratory and/or the photosynthetic chain. The immediate electron acceptor for the enzyme in this species is believed to be plastoquinone. Couples the redox reaction to proton translocation, and thus conserves the redox energy in a proton gradient. Cyanobacterial NDH-1 also plays a role in inorganic carbon-concentration. The sequence is that of NAD(P)H-quinone oxidoreductase subunit H from Prochlorococcus marinus (strain SARG / CCMP1375 / SS120).